We begin with the raw amino-acid sequence, 320 residues long: Aspartate carbamoyltransferase catalytic subunit (320 aa).

2 residues coordinate carbamoyl phosphate: Arg68 and Thr69. Lys96 is an L-aspartate binding site. Positions 118, 148, and 151 each coordinate carbamoyl phosphate. The L-aspartate site is built by Arg181 and Arg236. Residues Gly277 and Pro278 each coordinate carbamoyl phosphate.

Belongs to the aspartate/ornithine carbamoyltransferase superfamily. ATCase family. In terms of assembly, heterododecamer (2C3:3R2) of six catalytic PyrB chains organized as two trimers (C3), and six regulatory PyrI chains organized as three dimers (R2).

The enzyme catalyses carbamoyl phosphate + L-aspartate = N-carbamoyl-L-aspartate + phosphate + H(+). Its pathway is pyrimidine metabolism; UMP biosynthesis via de novo pathway; (S)-dihydroorotate from bicarbonate: step 2/3. Catalyzes the condensation of carbamoyl phosphate and aspartate to form carbamoyl aspartate and inorganic phosphate, the committed step in the de novo pyrimidine nucleotide biosynthesis pathway. This Variovorax paradoxus (strain S110) protein is Aspartate carbamoyltransferase catalytic subunit.